The primary structure comprises 150 residues: Large ribosomal subunit protein bL9 (150 aa).

Belongs to the bacterial ribosomal protein bL9 family.

Binds to the 23S rRNA. The protein is Large ribosomal subunit protein bL9 of Neisseria gonorrhoeae.